A 123-amino-acid polypeptide reads, in one-letter code: WAP four-disulfide core domain protein 5 (123 aa).

Positions 1–24 (MRTQSLLLLGALLAVGSQLPAVFG) are cleaved as a signal peptide. WAP domains are found at residues 27–74 (KGEK…VPRV) and 75–121 (SVKL…RDPA). Cystine bridges form between C34–C62, C41–C66, C49–C61, C55–C70, C81–C109, C88–C113, C96–C108, and C102–C117.

It localises to the secreted. Putative acid-stable proteinase inhibitor. The polypeptide is WAP four-disulfide core domain protein 5 (WFDC5) (Gorilla gorilla gorilla (Western lowland gorilla)).